A 269-amino-acid polypeptide reads, in one-letter code: Formamidopyrimidine-DNA glycosylase (269 aa).

Catalysis depends on P2, which acts as the Schiff-base intermediate with DNA. E3 functions as the Proton donor in the catalytic mechanism. K57 serves as the catalytic Proton donor; for beta-elimination activity. Residues H90, R109, and K150 each contribute to the DNA site. The segment at 235 to 269 (QVYGRKGEPCRVCGTPIVATKHAQRATFYCRHCQK) adopts an FPG-type zinc-finger fold. R259 serves as the catalytic Proton donor; for delta-elimination activity.

It belongs to the FPG family. Monomer. It depends on Zn(2+) as a cofactor.

The catalysed reaction is Hydrolysis of DNA containing ring-opened 7-methylguanine residues, releasing 2,6-diamino-4-hydroxy-5-(N-methyl)formamidopyrimidine.. It carries out the reaction 2'-deoxyribonucleotide-(2'-deoxyribose 5'-phosphate)-2'-deoxyribonucleotide-DNA = a 3'-end 2'-deoxyribonucleotide-(2,3-dehydro-2,3-deoxyribose 5'-phosphate)-DNA + a 5'-end 5'-phospho-2'-deoxyribonucleoside-DNA + H(+). Its function is as follows. Involved in base excision repair of DNA damaged by oxidation or by mutagenic agents. Acts as a DNA glycosylase that recognizes and removes damaged bases. Has a preference for oxidized purines, such as 7,8-dihydro-8-oxoguanine (8-oxoG). Has AP (apurinic/apyrimidinic) lyase activity and introduces nicks in the DNA strand. Cleaves the DNA backbone by beta-delta elimination to generate a single-strand break at the site of the removed base with both 3'- and 5'-phosphates. The sequence is that of Formamidopyrimidine-DNA glycosylase from Salmonella agona (strain SL483).